The following is a 572-amino-acid chain: Probable D-xylulose kinase A (572 aa).

Residues His95, Arg166, Asp282, and Asn283 each contribute to the substrate site. Residues Trp365, 470–471, and Asn474 contribute to the ATP site; that span reads GG.

Belongs to the FGGY kinase family.

Its subcellular location is the cytoplasm. The catalysed reaction is D-xylulose + ATP = D-xylulose 5-phosphate + ADP + H(+). In terms of biological role, highly specific D-xylulose kinase which participates in the catabolism of xylose. Xylose is a major component of hemicelluloses such as xylan. Most fungi utilize D-xylose via three enzymatic reactions, xylose reductase (XR), xylitol dehydrogenase (XDH), and xylulokinase, to form xylulose 5-phosphate, which enters pentose phosphate pathway. This chain is Probable D-xylulose kinase A (xkiA), found in Aspergillus flavus (strain ATCC 200026 / FGSC A1120 / IAM 13836 / NRRL 3357 / JCM 12722 / SRRC 167).